A 138-amino-acid chain; its full sequence is Salivary protein 15 Iper-3 (138 aa).

Positions 1-21 (MESFVAMKVVCITVLFVIVAV) are cleaved as a signal peptide. Residues Asn-30, Asn-42, Asn-68, Asn-107, and Asn-127 are each glycosylated (N-linked (GlcNAc...) asparagine). The interval 119–138 (GPNGQKCANKSQCVGHIPGC) is CD4-binding.

It belongs to the salp15 family. As to quaternary structure, interacts with host CD4. Interacts with host DC-SIGN (CD209). Interacts with Borrelia outer surface protein C (OspC). In terms of tissue distribution, expressed in salivary glands.

The protein localises to the secreted. In terms of biological role, salivary tick protein that downregulates host immune system by binding to both dendritic cells, and CD4(+) T cells. Specifically binds to the CD4 coreceptor on T cells. This interaction prevents the activation of the Src kinase, Lck, and its downstream substrate Zap-70, and results in deficient activation of PLCgamma1, the repression of calcium fluxes triggered by T-cell antigen receptor (TCR) ligation, and a subsequent reduction in interleukin-2 production. This salivary protein also binds to DC-SIGN (CD209) on dendritic cells (DC) and activates the Raf-1 kinase/MEK signaling pathway that results in down-regulating expression of pro-inflammatory cytokines. Furthermore, it inhibits T cell proliferation induced by DCs. It also inhibits in vitro keratinocyte inflammation induced by Borrelia burgdorferi or by the major outer surface protein (OspC) of Borrelia. In addition, it downregulates chemokines and monocyte chemoattractant protein 1, as well as several antimicrobial peptides such as defensins, cathelicidin, psoriasin, and RNase 7. Apart from its immunomodulatory activities, it is also associated with protection of Borrelia spirochetes from antibody-mediated killing through its binding to OspC. In vivo, tests on different immune disease animal models show promising therapeutic results, e.g., in inhibiting HIV infection, experimental autoimmune encephalomyelitis, transplantation rejection, and asthma. The sequence is that of Salivary protein 15 Iper-3 from Ixodes persulcatus (Taiga tick).